Here is a 137-residue protein sequence, read N- to C-terminus: MGRVRTKTVKRASKVLIERFYPKLTLDFETNKRLTSEIAVIQSKRLRNKIAGYTTHLMKRIQKGPVRGISFKLQEEERERKDQYVPEVSALDLSHTNGQLEIDADTADLVKSLGFKIPVQTVSISAQRGPRRFAKRN.

It belongs to the eukaryotic ribosomal protein eS17 family. Component of the small ribosomal subunit. Mature ribosomes consist of a small (40S) and a large (60S) subunit. The 40S subunit contains about 32 different proteins and 1 molecule of RNA (18S). The 60S subunit contains 45 different proteins and 3 molecules of RNA (25S, 5.8S and 5S).

The protein resides in the cytoplasm. Its function is as follows. Component of the ribosome, a large ribonucleoprotein complex responsible for the synthesis of proteins in the cell. The small ribosomal subunit (SSU) binds messenger RNAs (mRNAs) and translates the encoded message by selecting cognate aminoacyl-transfer RNA (tRNA) molecules. The large subunit (LSU) contains the ribosomal catalytic site termed the peptidyl transferase center (PTC), which catalyzes the formation of peptide bonds, thereby polymerizing the amino acids delivered by tRNAs into a polypeptide chain. The nascent polypeptides leave the ribosome through a tunnel in the LSU and interact with protein factors that function in enzymatic processing, targeting, and the membrane insertion of nascent chains at the exit of the ribosomal tunnel. The polypeptide is Small ribosomal subunit protein eS17 (RPS17B) (Candida albicans (strain SC5314 / ATCC MYA-2876) (Yeast)).